We begin with the raw amino-acid sequence, 121 residues long: Lysozyme (121 aa).

A C-type lysozyme domain is found at 1 to 121 (KTFTRCELVQ…NKPLPDISKC (121 aa)). 4 disulfide bridges follow: Cys6–Cys121, Cys27–Cys110, Cys62–Cys76, and Cys72–Cys90. Catalysis depends on residues Glu32 and Asp50.

Belongs to the glycosyl hydrolase 22 family.

It carries out the reaction Hydrolysis of (1-&gt;4)-beta-linkages between N-acetylmuramic acid and N-acetyl-D-glucosamine residues in a peptidoglycan and between N-acetyl-D-glucosamine residues in chitodextrins.. In terms of biological role, lysozymes have primarily a bacteriolytic function; those in tissues and body fluids are associated with the monocyte-macrophage system and enhance the activity of immunoagents. This is Lysozyme from Galleria mellonella (Greater wax moth).